The chain runs to 191 residues: Leucyl/phenylalanyl-tRNA--protein transferase (191 aa).

The protein belongs to the L/F-transferase family.

It is found in the cytoplasm. It carries out the reaction N-terminal L-lysyl-[protein] + L-leucyl-tRNA(Leu) = N-terminal L-leucyl-L-lysyl-[protein] + tRNA(Leu) + H(+). The enzyme catalyses N-terminal L-arginyl-[protein] + L-leucyl-tRNA(Leu) = N-terminal L-leucyl-L-arginyl-[protein] + tRNA(Leu) + H(+). The catalysed reaction is L-phenylalanyl-tRNA(Phe) + an N-terminal L-alpha-aminoacyl-[protein] = an N-terminal L-phenylalanyl-L-alpha-aminoacyl-[protein] + tRNA(Phe). Its function is as follows. Functions in the N-end rule pathway of protein degradation where it conjugates Leu, Phe and, less efficiently, Met from aminoacyl-tRNAs to the N-termini of proteins containing an N-terminal arginine or lysine. This is Leucyl/phenylalanyl-tRNA--protein transferase from Gloeothece citriformis (strain PCC 7424) (Cyanothece sp. (strain PCC 7424)).